The sequence spans 235 residues: Attacin-E (235 aa).

The first 19 residues, 1-19 (MFGKIVFLLLVALCAGVQS), serve as a signal peptide directing secretion. The propeptide occupies 20–47 (RYLIVSEPVYYIEHYEEPELLASSRVRR).

Belongs to the attacin/sarcotoxin-2 family. Attacin F appears to be derived by proteolytic digestion of attacin E.

It is found in the secreted. Hemolymph antibacterial protein. This is Attacin-E from Hyalophora cecropia (Cecropia moth).